The chain runs to 105 residues: Defensin-like protein 106 (105 aa).

Positions 1–24 are cleaved as a signal peptide; sequence MANTPKTLIAFVFSVIVIISYVHC. 4 disulfide bridges follow: Cys-57–Cys-94, Cys-63–Cys-87, Cys-73–Cys-92, and Cys-77–Cys-93.

Belongs to the DEFL family.

The protein localises to the secreted. In Arabidopsis thaliana (Mouse-ear cress), this protein is Defensin-like protein 106.